The following is a 123-amino-acid chain: MAATAELIPAGEVIACHTVEDWNNKLKAAKESNKLIVIDFTAVWCPPCRFIAPIFVELAKKHLDVVFFKVDVDELATVAKEFDVQAMPTFVYMKGEEKLDKVVGAAKEEIEAKLLKHSQVAAA.

Residues 2-119 (AATAELIPAG…IEAKLLKHSQ (118 aa)) form the Thioredoxin domain. A disulfide bond links C45 and C48.

It belongs to the thioredoxin family. Plant H-type subfamily.

Its subcellular location is the cytoplasm. In terms of biological role, participates in various redox reactions through the reversible oxidation of the active center dithiol to a disulfide. The H form is known to activate a number of cytosolic enzymes. This is Thioredoxin H-type (PEC-2) from Brassica campestris (Field mustard).